Consider the following 150-residue polypeptide: Large ribosomal subunit protein bL9 (150 aa).

It belongs to the bacterial ribosomal protein bL9 family.

Functionally, binds to the 23S rRNA. The chain is Large ribosomal subunit protein bL9 from Herminiimonas arsenicoxydans.